A 596-amino-acid chain; its full sequence is Arginine--tRNA ligase (596 aa).

The 'HIGH' region signature appears at 139-149 (ANPTGPLHVGH).

It belongs to the class-I aminoacyl-tRNA synthetase family. In terms of assembly, monomer.

The protein resides in the cytoplasm. It catalyses the reaction tRNA(Arg) + L-arginine + ATP = L-arginyl-tRNA(Arg) + AMP + diphosphate. The polypeptide is Arginine--tRNA ligase (Paraburkholderia phytofirmans (strain DSM 17436 / LMG 22146 / PsJN) (Burkholderia phytofirmans)).